The chain runs to 284 residues: Bifunctional protein FolD (284 aa).

NADP(+)-binding positions include 166–168 (GAS) and Ile232.

The protein belongs to the tetrahydrofolate dehydrogenase/cyclohydrolase family. In terms of assembly, homodimer.

The enzyme catalyses (6R)-5,10-methylene-5,6,7,8-tetrahydrofolate + NADP(+) = (6R)-5,10-methenyltetrahydrofolate + NADPH. It catalyses the reaction (6R)-5,10-methenyltetrahydrofolate + H2O = (6R)-10-formyltetrahydrofolate + H(+). It functions in the pathway one-carbon metabolism; tetrahydrofolate interconversion. In terms of biological role, catalyzes the oxidation of 5,10-methylenetetrahydrofolate to 5,10-methenyltetrahydrofolate and then the hydrolysis of 5,10-methenyltetrahydrofolate to 10-formyltetrahydrofolate. The polypeptide is Bifunctional protein FolD (Shewanella halifaxensis (strain HAW-EB4)).